The sequence spans 419 residues: UDP-N-acetylglucosamine 1-carboxyvinyltransferase (419 aa).

22 to 23 (KN) serves as a coordination point for phosphoenolpyruvate. A UDP-N-acetyl-alpha-D-glucosamine-binding site is contributed by arginine 93. The active-site Proton donor is cysteine 117. The residue at position 117 (cysteine 117) is a 2-(S-cysteinyl)pyruvic acid O-phosphothioketal. Aspartate 307 and isoleucine 329 together coordinate UDP-N-acetyl-alpha-D-glucosamine.

It belongs to the EPSP synthase family. MurA subfamily.

It is found in the cytoplasm. It carries out the reaction phosphoenolpyruvate + UDP-N-acetyl-alpha-D-glucosamine = UDP-N-acetyl-3-O-(1-carboxyvinyl)-alpha-D-glucosamine + phosphate. It participates in cell wall biogenesis; peptidoglycan biosynthesis. Cell wall formation. Adds enolpyruvyl to UDP-N-acetylglucosamine. The sequence is that of UDP-N-acetylglucosamine 1-carboxyvinyltransferase from Shewanella frigidimarina (strain NCIMB 400).